Consider the following 561-residue polypeptide: Asparagine synthetase [glutamine-hydrolyzing] (561 aa).

Residue cysteine 2 is the For GATase activity of the active site. One can recognise a Glutamine amidotransferase type-2 domain in the interval 2–191 (CGIWALFGSD…PGHYEVLDLK (190 aa)). L-glutamine-binding positions include 49-53 (RLAVV), 75-77 (NGE), and aspartate 97. In terms of domain architecture, Asparagine synthetase spans 213 to 536 (HALYDNVEKL…PGRADWLSHY (324 aa)). ATP contacts are provided by residues leucine 256, isoleucine 288, and 363 to 364 (SG). Lysine 385 carries the post-translational modification N6-acetyllysine. Position 545 is a phosphothreonine (threonine 545). Serine 557 is modified (phosphoserine).

The catalysed reaction is L-aspartate + L-glutamine + ATP + H2O = L-asparagine + L-glutamate + AMP + diphosphate + H(+). It participates in amino-acid biosynthesis; L-asparagine biosynthesis; L-asparagine from L-aspartate (L-Gln route): step 1/1. This chain is Asparagine synthetase [glutamine-hydrolyzing] (ASNS), found in Homo sapiens (Human).